The sequence spans 125 residues: uncharacterized protein (125 aa).

One can recognise a Cupin type-2 domain in the interval isoleucine 45 to cysteine 110.

This is an uncharacterized protein from Methanocaldococcus jannaschii (strain ATCC 43067 / DSM 2661 / JAL-1 / JCM 10045 / NBRC 100440) (Methanococcus jannaschii).